Consider the following 134-residue polypeptide: Small ribosomal subunit protein uS8 (134 aa).

This sequence belongs to the universal ribosomal protein uS8 family. In terms of assembly, part of the 30S ribosomal subunit. Contacts proteins S5 and S12.

One of the primary rRNA binding proteins, it binds directly to 16S rRNA central domain where it helps coordinate assembly of the platform of the 30S subunit. This Thermosipho melanesiensis (strain DSM 12029 / CIP 104789 / BI429) protein is Small ribosomal subunit protein uS8.